An 870-amino-acid chain; its full sequence is Ubiquitin-protein ligase E3A (870 aa).

Position 8 is a phosphoserine (Ser8). A C4-type; atypical zinc finger spans residues 42 to 81 (CGNEACTNEFCASCPTFLRMDNNAAAIKALELYKINAKLC). Over residues 171-180 (EELKSLQEKD) the composition is skewed to basic and acidic residues. A disordered region spans residues 171 to 223 (EELKSLQEKDEDKDEDEKEKAACSAAAMEEDSEASSSRMGDSSQGDNNVQKLG). The segment covering 208–220 (RMGDSSQGDNNVQ) has biased composition (polar residues). Ser213 is modified (phosphoserine). The region spanning 542–870 (NPADLKKQLY…ITYAKGFGML (329 aa)) is the HECT domain. Tyr654 is modified (phosphotyrosine; by ABL1). The active-site Glycyl thioester intermediate is the Cys838.

The active form is probably a homotrimer. Binds UBQLN1 and UBQLN2. Interacts with the 26S proteasome. Interacts with BPY2. Interacts with HIF1AN, MAPK6 and NEURL4; interaction with MAPK6 may be mediated by NEURL4. Interacts with the proteasomal subunit PSMD4. Interacts with BMAL1. Interacts with ARC. Interacts with ESR1 and WBP2. In terms of processing, phosphorylation at Tyr-654 by ABL1 impairs E3 ligase activity. As to expression, widely expressed. Most abundant in brain, heart and thymus.

It is found in the cytoplasm. The protein localises to the nucleus. The enzyme catalyses S-ubiquitinyl-[E2 ubiquitin-conjugating enzyme]-L-cysteine + [acceptor protein]-L-lysine = [E2 ubiquitin-conjugating enzyme]-L-cysteine + N(6)-ubiquitinyl-[acceptor protein]-L-lysine.. The protein operates within protein modification; protein ubiquitination. In terms of biological role, E3 ubiquitin-protein ligase which accepts ubiquitin from an E2 ubiquitin-conjugating enzyme in the form of a thioester and transfers it to its substrates. Several substrates have been identified including the BMAL1, ARC, LAMTOR1, RAD23A and RAD23B, MCM7 (which is involved in DNA replication), annexin A1, the PML tumor suppressor, and the cell cycle regulator CDKN1B. Additionally, may function as a cellular quality control ubiquitin ligase by helping the degradation of the cytoplasmic misfolded proteins. Finally, UBE3A also promotes its own degradation in vivo. Plays an important role in the regulation of the circadian clock: involved in the ubiquitination of the core clock component BMAL1, leading to its proteasomal degradation. Acts as a regulator of synaptic development by mediating ubiquitination and degradation of ARC. Required for synaptic remodeling in neurons by mediating ubiquitination and degradation of LAMTOR1, thereby limiting mTORC1 signaling and activity-dependent synaptic remodeling. Synergizes with WBP2 in enhancing PGR activity. This chain is Ubiquitin-protein ligase E3A, found in Mus musculus (Mouse).